A 474-amino-acid chain; its full sequence is Melanopsin (474 aa).

Residues 1-72 (MNSPSESRVP…VDVPDHAHYT (72 aa)) lie on the Extracellular side of the membrane. N-linked (GlcNAc...) asparagine glycans are attached at residues N31 and N35. Residues 73–93 (LGTVILLVGLTGMLGNLTVIY) form a helical membrane-spanning segment. Over 94-107 (TFCRNRGLRTPANM) the chain is Cytoplasmic. The chain crosses the membrane as a helical span at residues 108 to 128 (LIINLAVSDFLMSFTQAPVFF). Topologically, residues 129 to 144 (ASSLYKKWLFGETGCK) are extracellular. An intrachain disulfide couples C143 to C221. Residues 145–165 (FYAFCGAVFGIVSMITLTAIA) traverse the membrane as a helical segment. Topologically, residues 166-188 (MDRYLVITRPLATIGMRSKRRTA) are cytoplasmic. The helical transmembrane segment at 189–209 (LVLLGVWLYALAWSLPPFFGW) threads the bilayer. Topologically, residues 210–238 (SAYVPEGLLTSCSWDYVTFTPLVRAYTML) are extracellular. A helical membrane pass occupies residues 239 to 259 (LFCFVFFLPLLIIIFCYIFIF). Topologically, residues 260-293 (RAIRETGRACEGCGESPLRRRQWQRLQSEWKMAK) are cytoplasmic. Residues 294–314 (VALIVILLFVLSWAPYSTVAL) form a helical membrane-spanning segment. Residues 315–355 (VGFAGYSHILTPYMSSVPAVIAKASAIHNPIIYAITHPKYR) are Extracellular-facing. K337 is subject to N6-(retinylidene)lysine. Residues 356-372 (AAIAQHLPCLGVLLGVS) traverse the membrane as a helical segment. The Cytoplasmic segment spans residues 373 to 474 (GQRSHPSLSY…RHLPSLDRRM (102 aa)). A disordered region spans residues 428-474 (AAQQASGQSFCSHDLEDGEVKAPSSPQEQKSKTPKTKRHLPSLDRRM).

The protein belongs to the G-protein coupled receptor 1 family. Opsin subfamily. In terms of tissue distribution, eye; expressed in a photosensitive subset of retinal ganglion cells (at protein level).

Its subcellular location is the cell membrane. It is found in the cell projection. The protein localises to the axon. It localises to the dendrite. The protein resides in the perikaryon. Its function is as follows. Photoreceptor that binds cis-retinaldehydes. Contributes to pupillar reflex, photoentrainment and other non-image forming responses to light. May be involved in the optokinetic visual tracking response. May be involved in the regulation of retinal hyaloid vessel growth and regression. The chain is Melanopsin from Rattus norvegicus (Rat).